Reading from the N-terminus, the 47-residue chain is MAFEEAIKRVFMKKICMKCNSRNSWKATKCRKCGYTNLRPKAKEARA.

Belongs to the eukaryotic ribosomal protein eL40 family.

This Methanococcus maripaludis (strain C5 / ATCC BAA-1333) protein is Large ribosomal subunit protein eL40.